An 82-amino-acid chain; its full sequence is MTFPRALTVIDDNGMVISIIFWFLLIIILILFSIALLNIIKLCMVCCNLGRTVIIVPARHAYDAYKNFMQIRAYNPDEALLV.

Residues 1-19 (MTFPRALTVIDDNGMVISI) lie on the Virion surface side of the membrane. A helical membrane pass occupies residues 20–40 (IFWFLLIIILILFSIALLNII). At 41–82 (KLCMVCCNLGRTVIIVPARHAYDAYKNFMQIRAYNPDEALLV) the chain is on the intravirion side.

The protein belongs to the alphacoronaviruses E protein family. As to quaternary structure, homopentamer. Interacts with membrane protein M in the budding compartment of the host cell, which is located between endoplasmic reticulum and the Golgi complex. Interacts with Nucleoprotein.

It is found in the host Golgi apparatus membrane. Functionally, plays a central role in virus morphogenesis and assembly. Acts as a viroporin and self-assembles in host membranes forming pentameric protein-lipid pores that allow ion transport. Also plays a role in the induction of apoptosis. This chain is Envelope small membrane protein, found in Canine coronavirus (strain Insavc-1) (CCoV).